Consider the following 88-residue polypeptide: Insulin-related peptide 4 (88 aa).

An N-terminal signal peptide occupies residues 1–19 (MKLTLIILLVVAYSWCSEA). A propeptide spanning residues 20–45 (QNEARVFCGRVLSERLAALCWGPNSV) is cleaved from the precursor. An Arginine amide modification is found at arginine 65. A propeptide spanning residues 69-88 (GLATECCDKACTVEELLSYC) is cleaved from the precursor.

Belongs to the insulin family. As to expression, DAGWWLTRGAARSLGGVR-amide: Expressed in corpora cardiaca (CC), corpora allata (CA), antennal lobe (AL) and gnathal ganglion (GNG) (at protein level). Expression in CC and CA detected in most animals, in AL and GNG in few animals (at protein level).

The protein localises to the secreted. This Agrotis ipsilon (Black cutworm moth) protein is Insulin-related peptide 4.